Consider the following 217-residue polypeptide: Adenylate kinase (217 aa).

10–15 (GAGKGT) contacts ATP. An NMP region spans residues 30–59 (STGDIFRSNIKNGTELGRKAKEYIDKGLLV). AMP is bound by residues Thr-31, Arg-36, 57-59 (LLV), 85-88 (GFPR), and Gln-92. The segment at 126–163 (GRRVCSKCGMSYHIVYNQPKVENICDSCNGELIQRDDD) is LID. Arg-127 serves as a coordination point for ATP. Zn(2+)-binding residues include Cys-130 and Cys-133. An ATP-binding site is contributed by 136 to 137 (SY). Residues Cys-150 and Cys-153 each coordinate Zn(2+). Arg-160 and Arg-171 together coordinate AMP. Glu-199 lines the ATP pocket.

Belongs to the adenylate kinase family. In terms of assembly, monomer.

The protein resides in the cytoplasm. The enzyme catalyses AMP + ATP = 2 ADP. Its pathway is purine metabolism; AMP biosynthesis via salvage pathway; AMP from ADP: step 1/1. Catalyzes the reversible transfer of the terminal phosphate group between ATP and AMP. Plays an important role in cellular energy homeostasis and in adenine nucleotide metabolism. The protein is Adenylate kinase of Acetivibrio thermocellus (strain ATCC 27405 / DSM 1237 / JCM 9322 / NBRC 103400 / NCIMB 10682 / NRRL B-4536 / VPI 7372) (Clostridium thermocellum).